The following is a 529-amino-acid chain: Arginine--tRNA ligase (529 aa).

The 'HIGH' region signature appears at 113 to 123; that stretch reads ANPTGPLHIGH.

It belongs to the class-I aminoacyl-tRNA synthetase family. As to quaternary structure, monomer.

The protein resides in the cytoplasm. It catalyses the reaction tRNA(Arg) + L-arginine + ATP = L-arginyl-tRNA(Arg) + AMP + diphosphate. The polypeptide is Arginine--tRNA ligase (Campylobacter curvus (strain 525.92)).